The sequence spans 540 residues: Beta-2-syntrophin (540 aa).

Residues 73–114 (LPNGGGAGDSLPGSPSRGLGPPSPPAPPRGPAGEAGASPPVR) form a disordered region. Over residues 81-92 (DSLPGSPSRGLG) the composition is skewed to low complexity. Pro residues predominate over residues 93–102 (PPSPPAPPRG). 8 positions are modified to phosphoserine: serine 95, serine 110, serine 129, serine 211, serine 222, serine 233, serine 393, and serine 395. The span at 103–112 (PAGEAGASPP) shows a compositional bias: low complexity. The 84-residue stretch at 115 to 198 (RVRVVKQEAG…EVLLEVKFIR (84 aa)) folds into the PDZ domain. 2 consecutive PH domains span residues 163 to 300 (ILSV…TNIM) and 325 to 437 (EVKH…QGCH). A disordered region spans residues 220–240 (PQSPSFSGSEDSGSPKHQNST). Residues 222 to 231 (SPSFSGSEDS) are compositionally biased toward low complexity. Residues 484 to 540 (PFERLKMSADDGIRNLYLDFGGPEGELTMDLHSCPKPIVFVLHTFLSAKVTRMGLLV) form the SU domain. The tract at residues 518-540 (PKPIVFVLHTFLSAKVTRMGLLV) is calmodulin-binding.

This sequence belongs to the syntrophin family. Monomer and homodimer. Interacts with the other members of the syntrophin family: SNTA1 and SNTB1; and with the sodium channel proteins SCN4A and SCN5A. Interacts with SAST, MAST205, microtubules and microtubule-associated proteins. Interacts with the dystrophin protein DMD and related proteins DTNA and UTRN, and with the neuroregulin receptor ERBB4. Interacts with PTPRN when phosphorylated, protecting PTPRN from protein cleavage by CAPN1. Dephosphorylation upon insulin stimulation disrupts the interaction with PTPRN and results in the cleavage of PTPRN. Interacts with DTNB. Phosphorylated. Partially dephosphorylated upon insulin stimulation. In terms of tissue distribution, ubiquitous. Isoform 1 is the predominant isoform. Weak level of isoform 2 is present in all tested tissues, except in liver and heart where it is highly expressed.

The protein localises to the membrane. It localises to the cytoplasmic vesicle. Its subcellular location is the secretory vesicle membrane. It is found in the cell junction. The protein resides in the cytoplasm. The protein localises to the cytoskeleton. Adapter protein that binds to and probably organizes the subcellular localization of a variety of membrane proteins. May link various receptors to the actin cytoskeleton and the dystrophin glycoprotein complex. May play a role in the regulation of secretory granules via its interaction with PTPRN. This is Beta-2-syntrophin (SNTB2) from Homo sapiens (Human).